A 284-amino-acid chain; its full sequence is Four and a half LIM domains protein 5 (284 aa).

The segment at 8–32 (CQYCTASLLGKKYVLKDDSLFCVTC) adopts a C4-type zinc-finger fold. LIM zinc-binding domains lie at 39 to 100 (NYCE…ECSS), 101 to 160 (KCFH…KEFA), 161 to 220 (HYCN…LYAN), and 223 to 283 (VACS…MDSD).

In terms of assembly, interacts with CREM (via the third LIM domain). Interacts (via second LIM domain) with SPAG8.

The protein localises to the nucleus. Its function is as follows. May be involved in the regulation of spermatogenesis. Stimulates CREM transcriptional activity in a phosphorylation-independent manner. The protein is Four and a half LIM domains protein 5 (FHL5) of Macaca fascicularis (Crab-eating macaque).